The primary structure comprises 447 residues: N-succinylarginine dihydrolase (447 aa).

Substrate-binding positions include 19–28 (AGLSFGNEAS), asparagine 110, and 137–138 (HR). Residue glutamate 174 is part of the active site. Arginine 213 contacts substrate. Histidine 249 is an active-site residue. 2 residues coordinate substrate: aspartate 251 and asparagine 364. The Nucleophile role is filled by cysteine 370.

The protein belongs to the succinylarginine dihydrolase family. In terms of assembly, homodimer.

The catalysed reaction is N(2)-succinyl-L-arginine + 2 H2O + 2 H(+) = N(2)-succinyl-L-ornithine + 2 NH4(+) + CO2. It functions in the pathway amino-acid degradation; L-arginine degradation via AST pathway; L-glutamate and succinate from L-arginine: step 2/5. Functionally, catalyzes the hydrolysis of N(2)-succinylarginine into N(2)-succinylornithine, ammonia and CO(2). The polypeptide is N-succinylarginine dihydrolase (Yersinia pestis bv. Antiqua (strain Antiqua)).